We begin with the raw amino-acid sequence, 90 residues long: Putative toxin RelE1 (90 aa).

This sequence belongs to the RelE toxin family.

Functionally, toxic component of a type II toxin-antitoxin (TA) system. Its cognate antitoxin is RelB1 (Potential). This is Putative toxin RelE1 (relE1) from Methanocaldococcus jannaschii (strain ATCC 43067 / DSM 2661 / JAL-1 / JCM 10045 / NBRC 100440) (Methanococcus jannaschii).